Consider the following 550-residue polypeptide: Zinc finger protein squeeze (550 aa).

A compositionally biased stretch (low complexity) spans 73-105 (QQQQQQQQQEMLQQQQQHQAHQEQQQQQQQQQQ). Residues 73–179 (QQQQQQQQQE…GGGGGDGDQS (107 aa)) are disordered. The segment covering 106–117 (QHHHQQQQHHLK) has biased composition (basic residues). The span at 141–156 (RSPQRPLMSSGSNASS) shows a compositional bias: polar residues. The span at 164 to 176 (SGGGPGGGGGGDG) shows a compositional bias: gly residues. 5 C2H2-type zinc fingers span residues 182 to 204 (YKCASCSKSFANSSYLSQHTRIH), 210 to 232 (YRCEICQRKFTQLSHLQQHIRTH), 238 to 262 (YKCRHAGCPKAFSQLSNLQSHSRCH), 268 to 290 (FKCNSCYKCFADEMTLLEHIPKH), and 299 to 321 (HICNLCGKSYTQETYLQKHLQKH). The disordered stretch occupies residues 399 to 485 (LQQHQQQQQQ…VPPSHLQQHR (87 aa)). Residues 400–416 (QQHQQQQQQQQQDMLQQ) show a composition bias toward low complexity. Thr-424 is modified (phosphothreonine). Phosphoserine is present on residues Ser-428 and Ser-430. Residues 444 to 460 (QTTPQHHLQQQQQQQQP) are compositionally biased toward low complexity. Phosphotyrosine occurs at positions 494 and 496.

Belongs to the krueppel C2H2-type zinc-finger protein family. Interacts with nab; which acts as a coactivator. Interacts with ap.

It is found in the nucleus. In terms of biological role, transcription factor involved in neuronal fate specification. First required in embryonic CNS development to define the number of cells that express apterous (ap) in the ap thoracic cluster of interneurons. Later on, it plays a central role in the combinatorial code of transcription factors that specifies the fate of the Tv neuron in the ap cluster by participating in the transcription regulation of FMRFa in Tv cells. Also required for projection neuron dendritic targeting. This Drosophila pseudoobscura pseudoobscura (Fruit fly) protein is Zinc finger protein squeeze (sqz).